Consider the following 287-residue polypeptide: Heterodimeric geranylgeranyl pyrophosphate synthase small subunit 2, chloroplastic (287 aa).

Glu103 and Asp109 together coordinate Mg(2+). Dimethylallyl diphosphate contacts are provided by Lys204, Gln241, and Lys250.

Belongs to the FPP/GGPP synthase family. Part of a heterodimeric geranyl(geranyl)diphosphate synthase. The cofactor is Mg(2+). As to expression, mainly expressed in trichomes, and, to a lower extent, in roots, leaves, flowers and stems.

It localises to the plastid. The protein localises to the chloroplast thylakoid membrane. Heterodimeric geranyl(geranyl)-diphosphate (GPP) synthase small subunit. The small subunit alone is inactive in vitro while the large subunit GGPPS1 catalyzes mainly the production of geranygeranyl-diphosphate in vitro. Upon association of the two subunits, the product profile changes and the production of gerany-diphosphate is strongly increased. In Cannabis sativa (Hemp), this protein is Heterodimeric geranylgeranyl pyrophosphate synthase small subunit 2, chloroplastic.